The chain runs to 830 residues: Penicillin-binding protein 1A (830 aa).

Residues 1–18 (MGKKKKKRKSSAFKIILN) are Cytoplasmic-facing. The chain crosses the membrane as a helical; Signal-anchor for type II membrane protein span at residues 19–39 (VFLSIFLVAGVAFGGIVFAMI). Residues 40–830 (KTAPPLNVQQ…QNHEDNKNKQ (791 aa)) lie on the Extracellular side of the membrane. The transglycosylase stretch occupies residues 57 to 229 (SILYDDKGQY…PSVYYPYSSA (173 aa)). E96 (proton donor; for transglycosylase activity) is an active-site residue. The transpeptidase stretch occupies residues 357 to 641 (ASAVIMDYHN…AARLWGDIMK (285 aa)). S398 serves as the catalytic Acyl-ester intermediate; for transpeptidase activity. The interval 754-830 (GGSLPPTEEK…QNHEDNKNKQ (77 aa)) is disordered. Residues 760–786 (TEEKNNSNTRDKNKDKNKNKNKDKNPS) show a composition bias toward basic and acidic residues. The segment covering 787-820 (QDKPNNNNNDNNSNNNNNNNDNNNNTKPPENDSN) has biased composition (low complexity). Basic and acidic residues predominate over residues 821 to 830 (QNHEDNKNKQ).

It in the N-terminal section; belongs to the glycosyltransferase 51 family. The protein in the C-terminal section; belongs to the transpeptidase family.

The protein resides in the cell membrane. It carries out the reaction [GlcNAc-(1-&gt;4)-Mur2Ac(oyl-L-Ala-gamma-D-Glu-L-Lys-D-Ala-D-Ala)](n)-di-trans,octa-cis-undecaprenyl diphosphate + beta-D-GlcNAc-(1-&gt;4)-Mur2Ac(oyl-L-Ala-gamma-D-Glu-L-Lys-D-Ala-D-Ala)-di-trans,octa-cis-undecaprenyl diphosphate = [GlcNAc-(1-&gt;4)-Mur2Ac(oyl-L-Ala-gamma-D-Glu-L-Lys-D-Ala-D-Ala)](n+1)-di-trans,octa-cis-undecaprenyl diphosphate + di-trans,octa-cis-undecaprenyl diphosphate + H(+). It catalyses the reaction Preferential cleavage: (Ac)2-L-Lys-D-Ala-|-D-Ala. Also transpeptidation of peptidyl-alanyl moieties that are N-acyl substituents of D-alanine.. It participates in cell wall biogenesis; peptidoglycan biosynthesis. In terms of biological role, cell wall formation. Synthesis of cross-linked peptidoglycan from the lipid intermediates. The enzyme has a penicillin-insensitive transglycosylase N-terminal domain (formation of linear glycan strands) and a penicillin-sensitive transpeptidase C-terminal domain (cross-linking of the peptide subunits). This chain is Penicillin-binding protein 1A (pbpA), found in Clostridium botulinum (strain Hall / ATCC 3502 / NCTC 13319 / Type A).